A 291-amino-acid chain; its full sequence is 33 kDa chaperonin (291 aa).

2 cysteine pairs are disulfide-bonded: cysteine 235–cysteine 237 and cysteine 268–cysteine 271.

It belongs to the HSP33 family. Post-translationally, under oxidizing conditions two disulfide bonds are formed involving the reactive cysteines. Under reducing conditions zinc is bound to the reactive cysteines and the protein is inactive.

The protein localises to the cytoplasm. Redox regulated molecular chaperone. Protects both thermally unfolding and oxidatively damaged proteins from irreversible aggregation. Plays an important role in the bacterial defense system toward oxidative stress. This chain is 33 kDa chaperonin, found in Streptococcus agalactiae serotype Ia (strain ATCC 27591 / A909 / CDC SS700).